Here is a 172-residue protein sequence, read N- to C-terminus: Epithelial membrane protein 2 (172 aa).

4 consecutive transmembrane segments (helical) span residues 1 to 21 (MLVILAFIIVFHIVSTALLFI), 72 to 92 (TMILSTILSCISFLIFLLQLF), 100 to 120 (FVLTAIIQLMSCLCVMIGASV), and 148 to 168 (FILAWVAFAFTFISGLMYMIL).

This sequence belongs to the PMP-22/EMP/MP20 family. Interacts with PTK2; regulates PTK2 activation and localization. Interacts with ITGB3; regulates the levels of the heterodimer ITGA5-ITGB3 integrin surface expression. Interacts with P2RX7 (via C-terminus). Interacts with ITGB1; the interaction may be direct or indirect and ITGB1 has a heterodimer form. As to expression, expressed in glomeruli.

Its subcellular location is the golgi apparatus membrane. The protein localises to the cell membrane. It localises to the apical cell membrane. It is found in the membrane raft. The protein resides in the cytoplasm. Its subcellular location is the nucleus. The protein localises to the perinuclear region. Its function is as follows. Functions as a key regulator of cell membrane composition by regulating protein surface expression. Also, plays a role in regulation of processes including cell migration, cell proliferation, cell contraction and cell adhesion. Regulates transepithelial migration of neutrophils into the alveolar lumen, potentially via mediation of cell surface expression of adhesion markers and lipid raft formation. Negatively regulates caveolae formation by reducing CAV1 expression and CAV1 amount by increasing lysosomal degradation. Facilitates surface trafficking and the formation of lipid rafts bearing GPI-anchor proteins. Regulates surface expression of MHC1 and ICAM1 proteins increasing susceptibility to T-cell mediated cytotoxicity. Regulates the plasma membrane expression of the integrin heterodimers ITGA6-ITGB1, ITGA5-ITGB3 and ITGA5-ITGB1 resulting in modulation of cell-matrix adhesion. Also regulates many processes through PTK2. Regulates blood vessel endothelial cell migration and angiogenesis by regulating VEGF protein expression through PTK2 activation. Regulates cell migration and cell contraction through PTK2 and SRC activation. Regulates focal adhesion density, F-actin conformation and cell adhesion capacity through interaction with PTK2. Positively regulates cell proliferation. Plays a role during cell death and cell blebbing. Promotes angiogenesis and vasculogenesis through induction of VEGFA via a HIF1A-dependent pathway. Also plays a role in embryo implantation by regulating surface trafficking of integrin heterodimer ITGA5-ITGB3. Plays a role in placental angiogenesis and uterine natural killer cell regulation at the maternal-fetal placental interface, however not required in the maternal tissues for a viable pregnancy. Involved in the early stages of embryogenic development and cardiogenesis, potentially via regulation of epithelial-mesenchymal transition timing. May play a role in glomerular filtration. The sequence is that of Epithelial membrane protein 2 (Emp2) from Rattus norvegicus (Rat).